A 233-amino-acid polypeptide reads, in one-letter code: MLVPIPALNDNYIWLYGRANLPIIVIDIPEFTPLLDYVQQHQLNVEALLLTHHHDDHTAGVSLFKQHFPNVKVFGPAETQAKGATEIVNMGILQTEHYHIHVLQTAGHTEQHVSYLVDGHLFCGDSLFSAGCGRVFTGNYQHMFDGLQRLKSLPDDTIVCPAHEYTLANLAFAKYILPENVAIQQHEQWVQKQRVTHQPSLPTTMGREKQINPFLIAQDMETFVAWRKAKDVF.

7 residues coordinate Zn(2+): His-52, His-54, Asp-56, His-57, His-108, Asp-125, and His-163.

Belongs to the metallo-beta-lactamase superfamily. Glyoxalase II family. In terms of assembly, monomer. Requires Zn(2+) as cofactor.

The enzyme catalyses an S-(2-hydroxyacyl)glutathione + H2O = a 2-hydroxy carboxylate + glutathione + H(+). The protein operates within secondary metabolite metabolism; methylglyoxal degradation; (R)-lactate from methylglyoxal: step 2/2. Its function is as follows. Thiolesterase that catalyzes the hydrolysis of S-D-lactoyl-glutathione to form glutathione and D-lactic acid. The sequence is that of Hydroxyacylglutathione hydrolase from Pasteurella multocida (strain Pm70).